The following is a 227-amino-acid chain: Phosphoribosylformylglycinamidine synthase subunit PurQ (227 aa).

One can recognise a Glutamine amidotransferase type-1 domain in the interval 3 to 225; sequence FAVIVFPGSN…LKQWRETYVV (223 aa). Cysteine 86 serves as the catalytic Nucleophile. Residues histidine 194 and glutamate 196 contribute to the active site.

In terms of assembly, part of the FGAM synthase complex composed of 1 PurL, 1 PurQ and 2 PurS subunits.

It is found in the cytoplasm. The enzyme catalyses N(2)-formyl-N(1)-(5-phospho-beta-D-ribosyl)glycinamide + L-glutamine + ATP + H2O = 2-formamido-N(1)-(5-O-phospho-beta-D-ribosyl)acetamidine + L-glutamate + ADP + phosphate + H(+). It carries out the reaction L-glutamine + H2O = L-glutamate + NH4(+). Its pathway is purine metabolism; IMP biosynthesis via de novo pathway; 5-amino-1-(5-phospho-D-ribosyl)imidazole from N(2)-formyl-N(1)-(5-phospho-D-ribosyl)glycinamide: step 1/2. Functionally, part of the phosphoribosylformylglycinamidine synthase complex involved in the purines biosynthetic pathway. Catalyzes the ATP-dependent conversion of formylglycinamide ribonucleotide (FGAR) and glutamine to yield formylglycinamidine ribonucleotide (FGAM) and glutamate. The FGAM synthase complex is composed of three subunits. PurQ produces an ammonia molecule by converting glutamine to glutamate. PurL transfers the ammonia molecule to FGAR to form FGAM in an ATP-dependent manner. PurS interacts with PurQ and PurL and is thought to assist in the transfer of the ammonia molecule from PurQ to PurL. The polypeptide is Phosphoribosylformylglycinamidine synthase subunit PurQ (Bacillus anthracis (strain A0248)).